A 327-amino-acid chain; its full sequence is Metapyrocatechase (327 aa).

VOC domains are found at residues 14-126 (QLAH…IFFE) and 156-276 (RLDH…LFGD). 3 residues coordinate Fe cation: His159, His221, and Glu272.

This sequence belongs to the extradiol ring-cleavage dioxygenase family. Fe(2+) is required as a cofactor.

The catalysed reaction is catechol + O2 = (2Z,4E)-2-hydroxy-6-oxohexa-2,4-dienoate + H(+). The sequence is that of Metapyrocatechase (pheB) from Geobacillus stearothermophilus (Bacillus stearothermophilus).